Consider the following 213-residue polypeptide: ATP phosphoribosyltransferase (213 aa).

Belongs to the ATP phosphoribosyltransferase family. Short subfamily. Heteromultimer composed of HisG and HisZ subunits.

Its subcellular location is the cytoplasm. The enzyme catalyses 1-(5-phospho-beta-D-ribosyl)-ATP + diphosphate = 5-phospho-alpha-D-ribose 1-diphosphate + ATP. It functions in the pathway amino-acid biosynthesis; L-histidine biosynthesis; L-histidine from 5-phospho-alpha-D-ribose 1-diphosphate: step 1/9. Its function is as follows. Catalyzes the condensation of ATP and 5-phosphoribose 1-diphosphate to form N'-(5'-phosphoribosyl)-ATP (PR-ATP). Has a crucial role in the pathway because the rate of histidine biosynthesis seems to be controlled primarily by regulation of HisG enzymatic activity. This Listeria monocytogenes serotype 4a (strain HCC23) protein is ATP phosphoribosyltransferase.